Reading from the N-terminus, the 588-residue chain is Lysophospholipase 2 (588 aa).

A disordered region spans residues 15–38; it reads NRALPNAPDGYTPQGETCPSKRPS. Positions 31–574 constitute a PLA2c domain; that stretch reads TCPSKRPSIR…KTYCWNGTIN (544 aa). Asn41, Asn58, Asn77, Asn84, Asn88, Asn119, Asn123, Asn157, Asn167, Asn228, Asn272, Asn302, Asn340, Asn431, Asn449, Asn478, Asn481, Asn501, Asn510, Asn529, Asn553, Asn570, and Asn574 each carry an N-linked (GlcNAc...) asparagine glycan.

This sequence belongs to the lysophospholipase family.

It catalyses the reaction a 1-acyl-sn-glycero-3-phosphocholine + H2O = sn-glycerol 3-phosphocholine + a fatty acid + H(+). Its function is as follows. Catalyzes the release of fatty acids from lysophospholipids. The protein is Lysophospholipase 2 (plb2) of Aspergillus fumigatus (strain ATCC MYA-4609 / CBS 101355 / FGSC A1100 / Af293) (Neosartorya fumigata).